The sequence spans 219 residues: Protein OPG170 (219 aa).

The first 16 residues, 1-16, serve as a signal peptide directing secretion; the sequence is MYSLLFIILMCIPFSF. An N-linked (GlcNAc...) asparagine; by host glycan is attached at asparagine 70.

The protein belongs to the orthopoxvirus OPG170 family.

It is found in the secreted. Functionally, may interact with several cellular chemokines to interfere with chemokine-glycosaminoglycan (GAG) interactions at the cell surface to alter chemotaxis of nearby responsive cells. In Vaccinia virus (strain Copenhagen) (VACV), this protein is Protein OPG170 (OPG170).